The chain runs to 161 residues: uncharacterized protein (161 aa).

A helical transmembrane segment spans residues 76–94 (ISISSQCIFNVVILSFVFT).

Its subcellular location is the membrane. This is an uncharacterized protein from Saccharomyces cerevisiae (strain ATCC 204508 / S288c) (Baker's yeast).